A 713-amino-acid chain; its full sequence is Low-density lipoprotein receptor-related protein 10 (713 aa).

Positions 1-16 (MLLATLLLLLLGGALA) are cleaved as a signal peptide. The Extracellular portion of the chain corresponds to 17–440 (HPDRIIFPNH…WDCSYVLPRK (424 aa)). 2 cysteine pairs are disulfide-bonded: cysteine 28/cysteine 57 and cysteine 80/cysteine 98. Residues 28–136 (CEDPPAVLLE…QGFLLSYSQD (109 aa)) form the CUB 1 domain. N-linked (GlcNAc...) asparagine glycosylation occurs at asparagine 56. An N-linked (GlcNAc...) asparagine glycan is attached at asparagine 111. The 37-residue stretch at 139-175 (MCLQEEFQCLNHRCVSAVQRCDGVDACGDGSDEAGCS) folds into the LDL-receptor class A 1 domain. 4 disulfide bridges follow: cysteine 140–cysteine 152, cysteine 147–cysteine 165, cysteine 159–cysteine 174, and cysteine 192–cysteine 220. Residues 192–305 (CNVTLEDFYG…RGFNATYHVR (114 aa)) enclose the CUB 2 domain. N-linked (GlcNAc...) asparagine glycosylation is found at asparagine 193 and asparagine 299. 3 consecutive LDL-receptor class A domains span residues 307–354 (YCLP…EDCP), 355–397 (GCPP…RRCR), and 398–434 (HCQP…WDCS). 9 disulfides stabilise this stretch: cysteine 308-cysteine 331, cysteine 315-cysteine 344, cysteine 338-cysteine 353, cysteine 356-cysteine 374, cysteine 363-cysteine 387, cysteine 381-cysteine 396, cysteine 399-cysteine 411, cysteine 406-cysteine 424, and cysteine 418-cysteine 433. The chain crosses the membrane as a helical span at residues 441-461 (VITAAVIGSLVCGLLLVIALG). At 462-713 (CTCKLYAIRT…AEAEDEPLLT (252 aa)) the chain is on the cytoplasmic side. The segment at 564–637 (GLLPRTNTPA…SPAPTTVPEA (74 aa)) is disordered. Residues 569–584 (TNTPARASEARSQVTP) show a composition bias toward polar residues. A Phosphothreonine modification is found at threonine 596. A compositionally biased stretch (low complexity) spans 621–636 (PLPSASTSPAPTTVPE).

This sequence belongs to the LDLR family. In terms of tissue distribution, expressed in blood leukocyte, lung, placenta, small intestine, liver, kidney, spleen, thymus, colon, skeletal muscle and heart.

The protein localises to the membrane. It is found in the coated pit. Its function is as follows. Probable receptor, which is involved in the internalization of lipophilic molecules and/or signal transduction. May be involved in the uptake of lipoprotein APOE in liver. In Homo sapiens (Human), this protein is Low-density lipoprotein receptor-related protein 10 (LRP10).